Consider the following 205-residue polypeptide: Holliday junction branch migration complex subunit RuvA (205 aa).

The interval 1–64 (MIGHIQGVLT…EDAQLLYGFI (64 aa)) is domain I. Residues 65-143 (SASERSLFRL…DWQPSTPFTD (79 aa)) form a domain II region. The interval 136–157 (QPSTPFTDRAPLDSQGMDAREH) is disordered. Positions 144-156 (RAPLDSQGMDARE) are flexible linker. The tract at residues 157 to 205 (HPADARTDAISALQSLGYKENQAEKALQKVYSAEHNSETLIRLALKQLS) is domain III.

It belongs to the RuvA family. As to quaternary structure, homotetramer. Forms an RuvA(8)-RuvB(12)-Holliday junction (HJ) complex. HJ DNA is sandwiched between 2 RuvA tetramers; dsDNA enters through RuvA and exits via RuvB. An RuvB hexamer assembles on each DNA strand where it exits the tetramer. Each RuvB hexamer is contacted by two RuvA subunits (via domain III) on 2 adjacent RuvB subunits; this complex drives branch migration. In the full resolvosome a probable DNA-RuvA(4)-RuvB(12)-RuvC(2) complex forms which resolves the HJ.

Its subcellular location is the cytoplasm. The RuvA-RuvB-RuvC complex processes Holliday junction (HJ) DNA during genetic recombination and DNA repair, while the RuvA-RuvB complex plays an important role in the rescue of blocked DNA replication forks via replication fork reversal (RFR). RuvA specifically binds to HJ cruciform DNA, conferring on it an open structure. The RuvB hexamer acts as an ATP-dependent pump, pulling dsDNA into and through the RuvAB complex. HJ branch migration allows RuvC to scan DNA until it finds its consensus sequence, where it cleaves and resolves the cruciform DNA. This chain is Holliday junction branch migration complex subunit RuvA, found in Idiomarina loihiensis (strain ATCC BAA-735 / DSM 15497 / L2-TR).